The primary structure comprises 497 residues: Probable cytosol aminopeptidase (497 aa).

Positions 263 and 268 each coordinate Mn(2+). Lys275 is an active-site residue. Residues Asp286, Asp345, and Glu347 each coordinate Mn(2+). Residue Arg349 is part of the active site.

The protein belongs to the peptidase M17 family. Requires Mn(2+) as cofactor.

The protein localises to the cytoplasm. It carries out the reaction Release of an N-terminal amino acid, Xaa-|-Yaa-, in which Xaa is preferably Leu, but may be other amino acids including Pro although not Arg or Lys, and Yaa may be Pro. Amino acid amides and methyl esters are also readily hydrolyzed, but rates on arylamides are exceedingly low.. The catalysed reaction is Release of an N-terminal amino acid, preferentially leucine, but not glutamic or aspartic acids.. Functionally, presumably involved in the processing and regular turnover of intracellular proteins. Catalyzes the removal of unsubstituted N-terminal amino acids from various peptides. The polypeptide is Probable cytosol aminopeptidase (Agrobacterium fabrum (strain C58 / ATCC 33970) (Agrobacterium tumefaciens (strain C58))).